The primary structure comprises 682 residues: Methionine--tRNA ligase (682 aa).

A 'HIGH' region motif is present at residues 14-24 (PYANGSIHLGH). Zn(2+)-binding residues include Cys-145, Cys-148, Cys-158, and Cys-161. A 'KMSKS' region motif is present at residues 331 to 335 (KMSKS). Residue Lys-334 coordinates ATP. One can recognise a tRNA-binding domain in the interval 580–682 (AFAAVDLRVA…SGAKPGQRIK (103 aa)).

Belongs to the class-I aminoacyl-tRNA synthetase family. MetG type 1 subfamily. As to quaternary structure, homodimer. Requires Zn(2+) as cofactor.

The protein resides in the cytoplasm. The catalysed reaction is tRNA(Met) + L-methionine + ATP = L-methionyl-tRNA(Met) + AMP + diphosphate. Its function is as follows. Is required not only for elongation of protein synthesis but also for the initiation of all mRNA translation through initiator tRNA(fMet) aminoacylation. The polypeptide is Methionine--tRNA ligase (Pseudomonas savastanoi pv. phaseolicola (strain 1448A / Race 6) (Pseudomonas syringae pv. phaseolicola (strain 1448A / Race 6))).